Consider the following 721-residue polypeptide: Catalase-peroxidase 1 (721 aa).

The segment at residues 98 to 223 (WHAAGSYRVA…LAAVQMGLIY (126 aa)) is a cross-link (tryptophyl-tyrosyl-methioninium (Trp-Tyr) (with M-249)). H99 acts as the Proton acceptor in catalysis. A cross-link (tryptophyl-tyrosyl-methioninium (Tyr-Met) (with W-98)) is located at residues 223-249 (YVNPEGVNGQPDPLRTAQDVRVTFGRM). Heme b is bound at residue H264.

Belongs to the peroxidase family. Peroxidase/catalase subfamily. As to quaternary structure, homodimer or homotetramer. The cofactor is heme b. Post-translationally, formation of the three residue Trp-Tyr-Met cross-link is important for the catalase, but not the peroxidase activity of the enzyme.

The catalysed reaction is H2O2 + AH2 = A + 2 H2O. It carries out the reaction 2 H2O2 = O2 + 2 H2O. Its function is as follows. Bifunctional enzyme with both catalase and broad-spectrum peroxidase activity. This is Catalase-peroxidase 1 from Legionella pneumophila subsp. pneumophila (strain Philadelphia 1 / ATCC 33152 / DSM 7513).